The sequence spans 568 residues: Malate synthase, glyoxysomal (568 aa).

The interval Met-1–Gly-20 is disordered. Catalysis depends on Arg-183, which acts as the Proton acceptor. The active-site Proton donor is Asp-469. The short motif at Ser-566–Leu-568 is the Microbody targeting signal element.

It belongs to the malate synthase family.

The protein resides in the glyoxysome. It catalyses the reaction glyoxylate + acetyl-CoA + H2O = (S)-malate + CoA + H(+). It participates in carbohydrate metabolism; glyoxylate cycle; (S)-malate from isocitrate: step 2/2. The polypeptide is Malate synthase, glyoxysomal (Cucumis sativus (Cucumber)).